Here is a 660-residue protein sequence, read N- to C-terminus: CXXC-type zinc finger protein 1 (660 aa).

N-acetylmethionine is present on methionine 1. Over residues 1-14 the composition is skewed to acidic residues; it reads MEGDGSDLEPPDAG. The segment at 1-20 is disordered; sequence MEGDGSDLEPPDAGDDSKSE. Phosphoserine occurs at positions 6 and 19. The segment at 28-76 adopts a PHD-type zinc-finger fold; sequence YCICRKPDINCFMIGCDNCNEWFHGDCIRITEKMAKAIREWYCRECREK. Residues 91–120 show a composition bias toward basic and acidic residues; sequence ERDGSERAGSEPRDEGGGRKRPASDPELQR. Positions 91–166 are disordered; the sequence is ERDGSERAGS…QQQQQQQQQI (76 aa). Serine 124 carries the phosphoserine modification. A CXXC-type zinc finger spans residues 164-213; sequence QQIKRSARMCGECEACRRTEDCGHCDFCRDMKKFGGPNKIRQKCRLRQCQ. Cysteine 173, cysteine 176, cysteine 179, cysteine 185, cysteine 188, cysteine 191, cysteine 207, and cysteine 212 together coordinate Zn(2+). 2 disordered regions span residues 223 to 287 and 328 to 375; these read FPSS…SDED and AVKV…DPAS. Serine 228 carries the phosphoserine modification. Threonine 231 is subject to Phosphothreonine. Lysine 254 is covalently cross-linked (Glycyl lysine isopeptide (Lys-Gly) (interchain with G-Cter in SUMO2)). Over residues 328–338 the composition is skewed to basic residues; sequence AVKVKHVKRRE. A compositionally biased stretch (basic and acidic residues) spans 339 to 349; the sequence is KKSEKKKEERY. A compositionally biased stretch (basic residues) spans 350 to 362; that stretch reads KRHRQKQKHKDKW. Residues 363 to 372 show a composition bias toward basic and acidic residues; sequence KHPERADAKD. A coiled-coil region spans residues 426–479; that stretch reads AEEHGKKLLERIRREQQSARTRLQEMERRFHELEAIILRAKQQAVREDEENNEN.

In terms of assembly, component of the SET1 complex, at least composed of the catalytic subunit (SETD1A or SETD1B), WDR5, WDR82, RBBP5, ASH2L/ASH2, CXXC1/CFP1, HCFC1 and DPY30. Interacts with SETD1A. Interacts with ZNF335. Interacts with PRDM9; this interaction does not link PRDM9-activated recombination hotspot sites with DSB machinery and is not required for the hotspot recognition pathway. Interacts with histone H3K4me3. As to expression, expressed in seminiferous tubules and in both germ cells and Sertoli cells. Highly expressed in spermatogonia, weakly expressed in leptonema and zygonema, and then again high expression in pachynema and diplonema, decreasing to undetectable levels in spermatids.

Its subcellular location is the nucleus speckle. It is found in the nucleus. In terms of biological role, transcriptional activator that exhibits a unique DNA binding specificity for CpG unmethylated motifs with a preference for CpGG. This chain is CXXC-type zinc finger protein 1 (Cxxc1), found in Mus musculus (Mouse).